A 723-amino-acid polypeptide reads, in one-letter code: ATP-dependent DNA helicase RRM3 (723 aa).

Disordered stretches follow at residues 1–31 (MFRS…SGSH) and 61–101 (DLES…DDDP). Ser64 is modified (phosphoserine). The span at 83–96 (NNSSSLFSQSQGSF) shows a compositional bias: low complexity. 254–261 (GSAGTGKS) is a binding site for ATP. The DNA-binding element occupies 682-701 (QVYVALSRAVTMDTLQVLNF).

The protein belongs to the helicase family. As to quaternary structure, interacts with DEF1 and POL30.

Its subcellular location is the nucleus. The protein resides in the chromosome. It localises to the telomere. The catalysed reaction is Couples ATP hydrolysis with the unwinding of duplex DNA at the replication fork by translocating in the 5'-3' direction. This creates two antiparallel DNA single strands (ssDNA). The leading ssDNA polymer is the template for DNA polymerase III holoenzyme which synthesizes a continuous strand.. It catalyses the reaction ATP + H2O = ADP + phosphate + H(+). In terms of biological role, 5' to 3' DNA replicative helicase recruited to paused replisomes to promote fork progression throughout nonhistone protein-DNA complexes, naturally occurring impediments that are encountered in each S phase where replication forks pauses. Needed for normal fork progression through over 1000 discrete sites scattered throughout the genome, like rDNA, tRNA genes, centromeres, active replication origins, or transcriptional silencers. Required for timely replication of the telomere and subtelomeric DNA and for wild-type levels of telomeric silencing. Involved in regulation of Ty1 transposition and protects the genome from instability at nascent sites of retrotransposition. Involved in DNA repair during stalled replication fork, regulation of fragile sites expression and essential for genome stability. Also plays a role in mtDNA replication. Has G-quadruplex (G4) unwinding activity and can suppress G4-induced genome instability when PIF1 levels are low. This chain is ATP-dependent DNA helicase RRM3, found in Saccharomyces cerevisiae (strain ATCC 204508 / S288c) (Baker's yeast).